The primary structure comprises 317 residues: Small glutamine-rich tetratricopeptide repeat-containing protein 2 (317 aa).

4 TPR repeats span residues 14-48 (LKQAITTGSISEEEKESLEVAAQCIQDSFKIKPEE), 83-116 (AEKLKLEGNNAIAAKDYQKALDLYTKAIEIDPTS), 118-150 (VYYSNRAAAYNQLGQFENAVEDALTCLSLDPHH), and 151-184 (ARAFGRLGRAKLSLGDAAAAADAYKKGLDFDPNN). Over residues 198 to 215 (LNQPSDSSATSGADQART) the composition is skewed to polar residues. Disordered stretches follow at residues 198–224 (LNQPSDSSATSGADQARTSAGAAPDLG) and 298–317 (MNNNNNGNTDNNNQGNPPPQ).

It belongs to the SGT family.

Its subcellular location is the cytoplasm. It localises to the nucleus. Its function is as follows. Co-chaperone that binds to the molecular chaperone Hsp70 and regulates Hsp70 ATPase activity. This chain is Small glutamine-rich tetratricopeptide repeat-containing protein 2 (sgt2), found in Schizosaccharomyces pombe (strain 972 / ATCC 24843) (Fission yeast).